Reading from the N-terminus, the 364-residue chain is Thymidine kinase (364 aa).

Position 36 to 43 (36 to 43 (GPFGVGKT)) interacts with ATP. Catalysis depends on Glu64, which acts as the Proton acceptor. Residue Gln108 coordinates substrate. Position 201 (Arg201) interacts with ATP. Arg207 contributes to the substrate binding site.

This sequence belongs to the herpesviridae thymidine kinase family. As to quaternary structure, homodimer.

The enzyme catalyses thymidine + ATP = dTMP + ADP + H(+). Catalyzes the transfer of the gamma-phospho group of ATP to thymidine to generate dTMP in the salvage pathway of pyrimidine synthesis. The dTMP serves as a substrate for DNA polymerase during viral DNA replication. Allows the virus to be reactivated and to grow in non-proliferative cells lacking a high concentration of phosphorylated nucleic acid precursors. The sequence is that of Thymidine kinase from Infectious laryngotracheitis virus (strain Thorne V882) (ILTV).